The following is a 265-amino-acid chain: Leucyl/phenylalanyl-tRNA--protein transferase (265 aa).

Positions 244–265 (LDTGPDPASSSVTEISLRPAAP) are disordered.

It belongs to the L/F-transferase family.

The protein localises to the cytoplasm. It carries out the reaction N-terminal L-lysyl-[protein] + L-leucyl-tRNA(Leu) = N-terminal L-leucyl-L-lysyl-[protein] + tRNA(Leu) + H(+). The catalysed reaction is N-terminal L-arginyl-[protein] + L-leucyl-tRNA(Leu) = N-terminal L-leucyl-L-arginyl-[protein] + tRNA(Leu) + H(+). The enzyme catalyses L-phenylalanyl-tRNA(Phe) + an N-terminal L-alpha-aminoacyl-[protein] = an N-terminal L-phenylalanyl-L-alpha-aminoacyl-[protein] + tRNA(Phe). In terms of biological role, functions in the N-end rule pathway of protein degradation where it conjugates Leu, Phe and, less efficiently, Met from aminoacyl-tRNAs to the N-termini of proteins containing an N-terminal arginine or lysine. The polypeptide is Leucyl/phenylalanyl-tRNA--protein transferase (Methylibium petroleiphilum (strain ATCC BAA-1232 / LMG 22953 / PM1)).